Here is a 509-residue protein sequence, read N- to C-terminus: Maturase K (509 aa).

This sequence belongs to the intron maturase 2 family. MatK subfamily.

It localises to the plastid. Its subcellular location is the chloroplast. Usually encoded in the trnK tRNA gene intron. Probably assists in splicing its own and other chloroplast group II introns. This chain is Maturase K, found in Solanum lycopersicum (Tomato).